An 813-amino-acid chain; its full sequence is Probable E3 ubiquitin-protein ligase hulA (813 aa).

The 109-residue stretch at 1-109 (MGSNLPAQPN…QMGGDEMLTR (109 aa)) folds into the C2 domain. Disordered regions lie at residues 131-235 (NLST…GWER) and 251-351 (RTTT…YFVD). Polar residues predominate over residues 148-167 (VQSSTSSGLVPQVAPSSSHP). Residues 188-215 (RVPSTTRPSSTAAPASAAGAAVSNSHGS) show a composition bias toward low complexity. The WW 1 domain maps to 227-260 (GRLPAGWERREDNLGRTYYVDHNTRTTTWTRPSS). Over residues 251–264 (RTTTWTRPSSNYNE) the composition is skewed to polar residues. Positions 265 to 292 (HAQRSQREANMQLERRAHQSRMLPEDRT) are enriched in basic and acidic residues. A compositionally biased stretch (polar residues) spans 293-307 (GANSPNLPESSQQAH). The span at 322-331 (ATGATTAGTG) shows a compositional bias: low complexity. 2 WW domains span residues 331 to 364 (GELP…DPRR) and 391 to 424 (GPLP…DPRL). An HECT domain is found at 480 to 813 (SASDLKKRLM…VEETLGFGQE (334 aa)). Cysteine 781 serves as the catalytic Glycyl thioester intermediate.

It belongs to the RSP5/NEDD4 family. Interacts with creD.

The protein resides in the cytoplasm. It carries out the reaction S-ubiquitinyl-[E2 ubiquitin-conjugating enzyme]-L-cysteine + [acceptor protein]-L-lysine = [E2 ubiquitin-conjugating enzyme]-L-cysteine + N(6)-ubiquitinyl-[acceptor protein]-L-lysine.. It functions in the pathway protein modification; protein ubiquitination. Functionally, E3 ubiquitin-protein ligase which accepts ubiquitin from an E2 ubiquitin-conjugating enzyme in the form of a thioester and then directly transfers the ubiquitin to targeted substrates. Probably involved in the regulatory network controlling carbon source utilization. This is Probable E3 ubiquitin-protein ligase hulA (hulA) from Aspergillus fumigatus (strain CBS 144.89 / FGSC A1163 / CEA10) (Neosartorya fumigata).